The sequence spans 494 residues: Costunolide synthase (494 aa).

The helical transmembrane segment at 3–23 (PLTIVSLVVASLFLFAFWALS) threads the bilayer. Cys432 contributes to the heme binding site.

This sequence belongs to the cytochrome P450 family. Heme serves as cofactor.

The protein resides in the membrane. It carries out the reaction germacra-1(10),4,11(13)-trien-12-oate + reduced [NADPH--hemoprotein reductase] + O2 = (+)-costunolide + oxidized [NADPH--hemoprotein reductase] + 2 H2O. Hydroxylates germacrene A acid to 6-alpha-hydroxy-germacrne A acid, a precursor of sesquiterpene lactones that spontaneously undergoes a lactonization which yields costunolide. Costunolide can then spontaneously conjugate to glutathione or cysteine. This Cichorium intybus (Chicory) protein is Costunolide synthase (CYP71BL3).